The primary structure comprises 238 residues: tRNA (guanine-N(1)-)-methyltransferase (238 aa).

S-adenosyl-L-methionine is bound by residues glycine 109 and 129-134 (IGDFVL).

It belongs to the RNA methyltransferase TrmD family. Homodimer.

It is found in the cytoplasm. It catalyses the reaction guanosine(37) in tRNA + S-adenosyl-L-methionine = N(1)-methylguanosine(37) in tRNA + S-adenosyl-L-homocysteine + H(+). Its function is as follows. Specifically methylates guanosine-37 in various tRNAs. The polypeptide is tRNA (guanine-N(1)-)-methyltransferase (Exiguobacterium sp. (strain ATCC BAA-1283 / AT1b)).